A 411-amino-acid polypeptide reads, in one-letter code: Pyruvate dehydrogenase E1 component subunit alpha, mitochondrial (411 aa).

A mitochondrion-targeting transit peptide spans 1–29; the sequence is MFSRAVRLSRAALPIRVASQRVPIAARRS. Pyruvate is bound by residues His111, Tyr137, Arg138, Gly184, Val186, Asp215, Gly216, Ala217, Asn244, and Tyr246. 8 residues coordinate thiamine diphosphate: Tyr137, Arg138, Gly184, Val186, Asp215, Gly216, Ala217, and Asn244. Mg(2+) is bound at residue Asp215. Residues Asn244 and Tyr246 each coordinate Mg(2+). His311 provides a ligand contact to thiamine diphosphate.

Eukaryotic pyruvate dehydrogenase (PDH) complexes are organized as a core consisting of the oligomeric dihydrolipoamide acetyl-transferase (E2), around which are arranged multiple copies of pyruvate dehydrogenase (E1), dihydrolipoamide dehydrogenase (E3) and protein X (E3BP) bound by non-covalent bonds. The Chaetomium thermophilum PDH complex contains 60 E2 units, 12 E3BP units, about 20 E1 units, and 12 or more E3 units. The units are organized in 1 E2 60-mer, 4 E3BP trimers, about 20 E1 tetramers, and a maximum of 12 E3 dimers. Pyruvate dehydrogenase (E1) is active as a tetramer of 2 alpha and 2 beta subunits. The E3BP trimers are bound inside the icosahedral core with tetrahedral symmetry. It depends on thiamine diphosphate as a cofactor. Mg(2+) serves as cofactor.

It is found in the mitochondrion. The enzyme catalyses N(6)-[(R)-lipoyl]-L-lysyl-[protein] + pyruvate + H(+) = N(6)-[(R)-S(8)-acetyldihydrolipoyl]-L-lysyl-[protein] + CO2. The 10-megadalton pyruvate dehydrogenase complex contains multiple copies of three enzymatic components: pyruvate dehydrogenase (E1), dihydrolipoamide acetyltransferase (E2) and lipoamide dehydrogenase (E3) and catalyzes the overall oxidative decarboxylation of pyruvate to form acetyl-CoA and CO(2). Within the complex, pyruvate and thiamine pyrophosphate (TPP or vitamin B1) are bound by pyruvate dehydrogenase E1 subunits alpha and beta and pyruvate is decarboxylated leading to the 2-carbon hydrohyethyl bound to TPP. The E2 component contains covalently-bound lipoyl cofactors and transfers the hydroxyethyl group from TPP to an oxidized form of covalently bound lipoamide, and the resulting acetyl group is then transferred to free coenzyme A to form acetyl-CoA and reduced dihydrolipoamide-E2. Finally, the flavoprotein dihydrolipoamide dehydrogenase (E3) re-oxidizes the lipoyl group of dihydrolipoamide-E2 to form lipoamide-E2 and NADH. A fourth subunit, E3BP, is responsible for tethering E3 in proximity to the core, forming the entire metabolon. This chain is Pyruvate dehydrogenase E1 component subunit alpha, mitochondrial, found in Chaetomium thermophilum (strain DSM 1495 / CBS 144.50 / IMI 039719) (Thermochaetoides thermophila).